The sequence spans 819 residues: Protein kinase C-binding protein NELL2 (819 aa).

The signal sequence occupies residues 1 to 24 (MHAMESRVLLRTFCVILGLEAVWG). 4 N-linked (GlcNAc...) asparagine glycosylation sites follow: asparagine 56, asparagine 228, asparagine 296, and asparagine 301. A Laminin G-like domain is found at 58–231 (TKAFLFQDSP…AQCPDLNRTC (174 aa)). Residues 275–334 (RTCTMKGTTYREFESWTDGCKNCTCLNGTIQCETLVCPAPDCPAKSAPAYVDGKCCKECK) form the VWFC 1 domain. Residues 400 to 442 (GYDFCSEKHTCMENSVCRNLNDRAVCSCRDGFRALREDNAYCE) form the EGF-like 1 domain. Cystine bridges form between cysteine 404–cysteine 416, cysteine 410–cysteine 425, and cysteine 427–cysteine 441. Ca(2+) is bound by residues aspartate 443, isoleucine 444, and glutamate 446. Positions 443–484 (DIDECAEGRHYCRENTMCVNTPGSFLCICQTGYIRIDDYSCT) constitute an EGF-like 2; calcium-binding domain. 9 disulfides stabilise this stretch: cysteine 447/cysteine 460, cysteine 454/cysteine 469, cysteine 471/cysteine 483, cysteine 489/cysteine 502, cysteine 496/cysteine 511, cysteine 513/cysteine 524, cysteine 528/cysteine 538, cysteine 532/cysteine 544, and cysteine 546/cysteine 555. Ca(2+) contacts are provided by asparagine 462, threonine 463, and serine 466. An EGF-like 3; calcium-binding domain is found at 485–525 (EHDECLTNQHNCDENALCFNTVGGHNCVCKPGYTGNGTTCK). N-linked (GlcNAc...) asparagine glycosylation occurs at asparagine 520. In terms of domain architecture, EGF-like 4 spans 526 to 556 (AFCKDGCRNGGACIAANVCACPQGFTGPSCE). Residue threonine 551 is glycosylated (O-linked (GlcNAc...) threonine). Residues aspartate 558, isoleucine 559, and glutamate 561 each contribute to the Ca(2+) site. An EGF-like 5; calcium-binding domain is found at 558 to 604 (DIDECSEGFVQCDSRANCINLPGWYHCECRDGYHDNGMFAPGGESCE). 3 disulfide bridges follow: cysteine 562–cysteine 575, cysteine 569–cysteine 584, and cysteine 586–cysteine 603. Residues asparagine 577, leucine 578, and tryptophan 581 each contribute to the Ca(2+) site. Residues aspartate 605, isoleucine 606, and glutamate 608 each coordinate Ca(2+). The EGF-like 6; calcium-binding domain occupies 605–640 (DIDECGTGRHSCANDTICFNLDGGYDCRCPHGKNCT). 3 disulfide bridges follow: cysteine 609/cysteine 622, cysteine 616/cysteine 631, and cysteine 633/cysteine 639. The N-linked (GlcNAc...) asparagine glycan is linked to asparagine 618. Residues asparagine 624, leucine 625, and glycine 628 each coordinate Ca(2+). The N-linked (GlcNAc...) asparagine glycan is linked to asparagine 638. VWFC domains are found at residues 641–696 (GDCV…PECD) and 701–759 (SQCL…PRCV).

As to quaternary structure, homotrimer. Binds to PRKCB. Interacts with NICOL1; this interaction triggers epididymal differentiation. In terms of assembly, binds to PRKCB. Widely expressed. Expressed in cortical astrocytes but not in neuron. As to expression, widely expressed in brain. High expression is observed in telencephalic and diencephalic glutamatergic neurons, while no expression is found in GABAergic and GNRH neurons.

It is found in the secreted. Its subcellular location is the cytoplasm. Functionally, plays multiple roles In neural tissues, regulates neuronal proliferation, survival, differentiation, polarization, as well as axon guidance and synaptic functions. Plays an important role in axon development during neuronal differentiation through the MAPK intracellular signaling pathway. Via binding to its receptor ROBO3, plays a role in axon guidance, functioning as a repulsive axon guidance cue that contributes to commissural axon guidance to the midline. Required for neuron survival through the modulation of MAPK signaling pathways too. Involved in the regulation of hypothalamic GNRH secretion and the control of puberty. Epididymal-secreted protein that signals through a ROS1-pathway to regulate the epididymal initial segment (IS) maturation, sperm maturation and male fertility. In terms of biological role, acts as an endogenous inhibitor of PRKCB in glia. This Rattus norvegicus (Rat) protein is Protein kinase C-binding protein NELL2 (Nell2).